A 101-amino-acid chain; its full sequence is MNLERVSNEEKLNLCRKYYLGGFAFLPFLWLVNIFWFFREAFLAPAYTEQSQIKGYVWRSAVGFLFWVIILATWITIFQIYRPRWGALGDYLSFTIPLGTP.

Topologically, residues 1–17 are cytoplasmic; sequence MNLERVSNEEKLNLCRK. The helical intramembrane region spans 18 to 36; that stretch reads YYLGGFAFLPFLWLVNIFW. Residues 37 to 57 lie on the Cytoplasmic side of the membrane; it reads FFREAFLAPAYTEQSQIKGYV. Residues 58–78 traverse the membrane as a helical segment; it reads WRSAVGFLFWVIILATWITIF. The Lumenal portion of the chain corresponds to 79–101; that stretch reads QIYRPRWGALGDYLSFTIPLGTP.

The protein belongs to the PEN-2 family. As to quaternary structure, the functional gamma-secretase complex is composed of at least four polypeptides: a presenilin homodimer (PSEN1 or PSEN2), nicastrin (NCSTN), APH1 (APH1A or APH1B) and PSENEN.

It is found in the endoplasmic reticulum membrane. The protein resides in the golgi apparatus. Its subcellular location is the golgi stack membrane. The protein localises to the cell membrane. It localises to the membrane. In terms of biological role, essential subunit of the gamma-secretase complex, an endoprotease complex that catalyzes the intramembrane cleavage of integral membrane proteins such as Notch receptors and APP (amyloid-beta precursor protein). The gamma-secretase complex plays a role in Notch and Wnt signaling cascades and regulation of downstream processes via its role in processing key regulatory proteins, and by regulating cytosolic CTNNB1 levels. PSENEN modulates both endoproteolysis of presenilin and gamma-secretase activity. In Mus musculus (Mouse), this protein is Gamma-secretase subunit PEN-2 (Psenen).